We begin with the raw amino-acid sequence, 609 residues long: Pogo transposable element with KRAB domain (609 aa).

2 disordered regions span residues 1–28 and 100–127; these read MEST…ELED and EGEE…SDVK. The stretch at 8–28 forms a coiled coil; sequence LNLSLKEEEEEEEIQSRELED. Lys-13 is covalently cross-linked (Glycyl lysine isopeptide (Lys-Gly) (interchain with G-Cter in SUMO2)). Residues 47–118 enclose the KRAB domain; sequence ALFDEVAIYF…DEWQLQGGTS (72 aa). Over residues 108–119 the composition is skewed to polar residues; it reads SDEWQLQGGTSA. Residues 250–323 form the HTH CENPB-type domain; sequence AFRGPKNGRF…MRRYDLSLRH (74 aa). One can recognise a DDE-1 domain in the interval 353–567; that stretch reads HDYEVAQMGN…ISSESIVQGF (215 aa). Lys-384 is covalently cross-linked (Glycyl lysine isopeptide (Lys-Gly) (interchain with G-Cter in SUMO2)). The disordered stretch occupies residues 588–609; sequence SELPGGGEPPKDCDTESMAESN.

The protein localises to the nucleus. The protein is Pogo transposable element with KRAB domain (POGK) of Homo sapiens (Human).